A 257-amino-acid chain; its full sequence is Probable pectate lyase G (257 aa).

A signal peptide spans 1 to 24; that stretch reads MPVLSKLLPTLTLTLPLLAGPCLA.

Belongs to the polysaccharide lyase 3 family. It depends on Ca(2+) as a cofactor.

It localises to the secreted. The catalysed reaction is Eliminative cleavage of (1-&gt;4)-alpha-D-galacturonan to give oligosaccharides with 4-deoxy-alpha-D-galact-4-enuronosyl groups at their non-reducing ends.. Its function is as follows. Pectinolytic enzyme consist of four classes of enzymes: pectin lyase, polygalacturonase, pectin methylesterase and rhamnogalacturonase. Among pectinolytic enzymes, pectin lyase is the most important in depolymerization of pectin, since it cleaves internal glycosidic bonds of highly methylated pectins. Favors pectate, the anion, over pectin, the methyl ester. This chain is Probable pectate lyase G (plyG), found in Emericella nidulans (strain FGSC A4 / ATCC 38163 / CBS 112.46 / NRRL 194 / M139) (Aspergillus nidulans).